Reading from the N-terminus, the 196-residue chain is Rac-like GTP-binding protein ARAC5 (196 aa).

16-21 (AVGKTC) serves as a coordination point for GTP. Residues 35 to 43 (YVPTVFDNF) carry the Effector region motif. GTP contacts are provided by residues 119–121 (KLD) and 159–161 (SSK). Position 193 is a cysteine methyl ester (Cys-193). Cys-193 carries S-geranylgeranyl cysteine lipidation. The propeptide at 194–196 (VFL) is removed in mature form.

It belongs to the small GTPase superfamily. Rho family. Interacts with GDI1 and ROPGEF8 homodimer. Binds to SPK1. Ubiquitous. Preferentially expressed at the tip of root hairs.

The protein resides in the cytoplasm. Its subcellular location is the membrane. The protein localises to the cell membrane. Functionally, involved in cell polarity control during the actin-dependent tip growth of root hairs, thus regulating root hair length and root hair initiation. In terms of biological role, inactive GDP-bound Rho GTPases reside in the cytosol, are found in a complex with Rho GDP-dissociation inhibitors (Rho GDIs), and are released from the GDI protein in order to translocate to membranes upon activation. The chain is Rac-like GTP-binding protein ARAC5 from Arabidopsis thaliana (Mouse-ear cress).